We begin with the raw amino-acid sequence, 366 residues long: Nodulation protein NolL (366 aa).

Transmembrane regions (helical) follow at residues 27 to 47, 62 to 82, 98 to 118, 140 to 160, 164 to 184, 212 to 232, 253 to 273, 286 to 306, and 324 to 344; these read FVKG…LVIY, IYMF…SGTI, LLIP…AAFF, FLWA…FNLL, ILCA…IVPL, HKSL…LDWG, VLLM…SLFH, LVAV…GAVF, and IVVA…VLWI.

Belongs to the acyltransferase 3 family.

The protein resides in the cell membrane. In terms of biological role, thought to be an acetyltransferase that modifies the fucose of the nod factor. In Sinorhizobium fredii (strain NBRC 101917 / NGR234), this protein is Nodulation protein NolL (nolL).